The chain runs to 390 residues: HIT domain-containing protein DDB_G0272839 (390 aa).

Residues 168–201 (DNENEKEKEKEMELDNDNTNTESIPPITSKSTST) are disordered. Positions 184 to 201 (DNTNTESIPPITSKSTST) are enriched in low complexity. The HIT domain occupies 232–343 (YFCNKPESFL…ISNDYNTKYL (112 aa)).

This is HIT domain-containing protein DDB_G0272839 from Dictyostelium discoideum (Social amoeba).